The chain runs to 394 residues: Elongation factor Tu (394 aa).

One can recognise a tr-type G domain in the interval 10–204 (KEHVNVGTIG…AVDTYIENPV (195 aa)). Residues 19-26 (GHVDHGKT) are G1. 19 to 26 (GHVDHGKT) serves as a coordination point for GTP. A Mg(2+)-binding site is contributed by T26. The tract at residues 60 to 64 (GITIN) is G2. The interval 81–84 (DCPG) is G3. GTP contacts are provided by residues 81–85 (DCPGH) and 136–139 (NKCD). The G4 stretch occupies residues 136 to 139 (NKCD). A G5 region spans residues 174–176 (SAL).

It belongs to the TRAFAC class translation factor GTPase superfamily. Classic translation factor GTPase family. EF-Tu/EF-1A subfamily. Monomer.

It is found in the cytoplasm. It carries out the reaction GTP + H2O = GDP + phosphate + H(+). GTP hydrolase that promotes the GTP-dependent binding of aminoacyl-tRNA to the A-site of ribosomes during protein biosynthesis. In Mycoplasmopsis synoviae (strain 53) (Mycoplasma synoviae), this protein is Elongation factor Tu.